The sequence spans 179 residues: uncharacterized protein (179 aa).

The tract at residues 1–32 (MELQGAQEDLGISLSSPRRNHETRPGSKAKGR) is disordered.

This is an uncharacterized protein from Homo sapiens (Human).